The sequence spans 385 residues: UDP-N-acetylglucosamine--N-acetylmuramyl-(pentapeptide) pyrophosphoryl-undecaprenol N-acetylglucosamine transferase (385 aa).

UDP-N-acetyl-alpha-D-glucosamine is bound by residues 11–13 (TGG), Asn117, Arg160, Ser215, and Gln317.

Belongs to the glycosyltransferase 28 family. MurG subfamily.

The protein resides in the cell inner membrane. The enzyme catalyses di-trans,octa-cis-undecaprenyl diphospho-N-acetyl-alpha-D-muramoyl-L-alanyl-D-glutamyl-meso-2,6-diaminopimeloyl-D-alanyl-D-alanine + UDP-N-acetyl-alpha-D-glucosamine = di-trans,octa-cis-undecaprenyl diphospho-[N-acetyl-alpha-D-glucosaminyl-(1-&gt;4)]-N-acetyl-alpha-D-muramoyl-L-alanyl-D-glutamyl-meso-2,6-diaminopimeloyl-D-alanyl-D-alanine + UDP + H(+). Its pathway is cell wall biogenesis; peptidoglycan biosynthesis. In terms of biological role, cell wall formation. Catalyzes the transfer of a GlcNAc subunit on undecaprenyl-pyrophosphoryl-MurNAc-pentapeptide (lipid intermediate I) to form undecaprenyl-pyrophosphoryl-MurNAc-(pentapeptide)GlcNAc (lipid intermediate II). The chain is UDP-N-acetylglucosamine--N-acetylmuramyl-(pentapeptide) pyrophosphoryl-undecaprenol N-acetylglucosamine transferase from Rickettsia typhi (strain ATCC VR-144 / Wilmington).